A 506-amino-acid polypeptide reads, in one-letter code: DNA polymerase type-X family protein pol4 (506 aa).

In terms of domain architecture, BRCT spans 1–98 (MKILASSTNY…TPGNPYVIWH (98 aa)). The segment at 106–150 (GSPYTPSTRPASHTEAPNDFENHETPNTENNNEVKSIDNVDQEGS) is disordered. Residues 348-357 (RGKPVGADVD) form an involved in ssDNA binding region. Asp355, Asp357, and Asp419 together coordinate Mg(2+).

This sequence belongs to the DNA polymerase type-X family. Mg(2+) serves as cofactor.

The protein resides in the cytoplasm. The protein localises to the nucleus. The catalysed reaction is DNA(n) + a 2'-deoxyribonucleoside 5'-triphosphate = DNA(n+1) + diphosphate. In terms of biological role, repair polymerase. Involved in gap-filling in DNA non-homologous end joining (NHEJ) required for double-strand break repair. Can incorporate a ribonucleotide (rNTP) into a primer DNA. This is DNA polymerase type-X family protein pol4 (pol4) from Schizosaccharomyces pombe (strain 972 / ATCC 24843) (Fission yeast).